The primary structure comprises 496 residues: Cobyric acid synthase (496 aa).

The 191-residue stretch at 257-447 (KINVAIILLK…MHGILDNPAV (191 aa)) folds into the GATase cobBQ-type domain. Cys338 serves as the catalytic Nucleophile. Residue His439 is part of the active site.

The protein belongs to the CobB/CobQ family. CobQ subfamily.

Its pathway is cofactor biosynthesis; adenosylcobalamin biosynthesis. Its function is as follows. Catalyzes amidations at positions B, D, E, and G on adenosylcobyrinic A,C-diamide. NH(2) groups are provided by glutamine, and one molecule of ATP is hydrogenolyzed for each amidation. This is Cobyric acid synthase from Parabacteroides distasonis (strain ATCC 8503 / DSM 20701 / CIP 104284 / JCM 5825 / NCTC 11152).